The chain runs to 535 residues: uncharacterized protein (535 aa).

The helical transmembrane segment at 17–37 threads the bilayer; sequence IVLLCMIGFFCTTFMRIHFAL. Residues Asn-44 and Asn-61 are each glycosylated (N-linked (GlcNAc...) asparagine). The next 6 membrane-spanning stretches (helical) occupy residues 107 to 127, 144 to 164, 167 to 187, 199 to 219, 225 to 245, and 292 to 312; these read LIFS…MFFI, ILVT…SVFL, IGMG…IGNW, IFTL…AAVC, WPAT…LWFF, and AFLG…LFQI. An N-linked (GlcNAc...) asparagine glycan is attached at Asn-329. A run of 5 helical transmembrane segments spans residues 331-351, 368-388, 395-415, 429-451, and 463-483; these read TFTA…GIGI, VSHG…AFFV, TGLI…SGFY, MSAI…MSMF, and IFIG…LFGS.

The protein belongs to the major facilitator superfamily. Sodium/anion cotransporter family.

Its subcellular location is the membrane. This is an uncharacterized protein from Caenorhabditis elegans.